The chain runs to 242 residues: Exosome complex component ski6 (242 aa).

This sequence belongs to the RNase PH family. Component of the RNA exosome complex. Specifically part of the catalytically inactive RNA exosome core complex (Exo-9) which may associate with the catalytic subunits rrp6 and dis3 in cytoplasmic- and nuclear-specific RNA exosome complex forms. Exo-9 is formed by a hexameric base ring of RNase PH domain-containing subunits and a cap ring consisting of csl4, rrp4 and rrp40.

Its subcellular location is the cytoplasm. It localises to the nucleus. It is found in the nucleolus. Functionally, non-catalytic component of the RNA exosome complex which has 3'-&gt;5' exoribonuclease activity and participates in a multitude of cellular RNA processing and degradation events. In the nucleus, the RNA exosome complex is involved in proper maturation of stable RNA species such as rRNA, snRNA and snoRNA, in the elimination of RNA processing by-products and non-coding 'pervasive' transcripts, such as antisense RNA species and cryptic unstable transcripts (CUTs), and of mRNAs with processing defects, thereby limiting or excluding their export to the cytoplasm. In the cytoplasm, the RNA exosome complex is involved in general mRNA turnover and in RNA surveillance pathways, preventing translation of aberrant mRNAs. The catalytic inactive RNA exosome core complex of 9 subunits (Exo-9) is proposed to play a pivotal role in the binding and presentation of RNA for ribonucleolysis, and to serve as a scaffold for the association with catalytic subunits and accessory proteins or complexes. ski6 is part of the hexameric ring of RNase PH domain-containing subunits proposed to form a central channel which threads RNA substrates for degradation. The polypeptide is Exosome complex component ski6 (ski6) (Schizosaccharomyces pombe (strain 972 / ATCC 24843) (Fission yeast)).